The following is a 167-amino-acid chain: Insertion element IS1 protein InsB (167 aa).

It belongs to the transposase 27 family.

Functionally, absolutely required for transposition of IS1. This is Insertion element IS1 protein InsB (insB) from Escherichia coli.